Consider the following 241-residue polypeptide: Leucyl/phenylalanyl-tRNA--protein transferase (241 aa).

It belongs to the L/F-transferase family.

It is found in the cytoplasm. It catalyses the reaction N-terminal L-lysyl-[protein] + L-leucyl-tRNA(Leu) = N-terminal L-leucyl-L-lysyl-[protein] + tRNA(Leu) + H(+). The enzyme catalyses N-terminal L-arginyl-[protein] + L-leucyl-tRNA(Leu) = N-terminal L-leucyl-L-arginyl-[protein] + tRNA(Leu) + H(+). The catalysed reaction is L-phenylalanyl-tRNA(Phe) + an N-terminal L-alpha-aminoacyl-[protein] = an N-terminal L-phenylalanyl-L-alpha-aminoacyl-[protein] + tRNA(Phe). Its function is as follows. Functions in the N-end rule pathway of protein degradation where it conjugates Leu, Phe and, less efficiently, Met from aminoacyl-tRNAs to the N-termini of proteins containing an N-terminal arginine or lysine. This chain is Leucyl/phenylalanyl-tRNA--protein transferase, found in Colwellia psychrerythraea (strain 34H / ATCC BAA-681) (Vibrio psychroerythus).